We begin with the raw amino-acid sequence, 391 residues long: Rhizopuspepsin-3 (391 aa).

Residues 1–21 (MKFTLISSCVTLALMTLSIEA) form the signal peptide. The propeptide at 22–68 (APSGKKVNIPLTKNKDYKPNAKNAIQKAIAKYHRHRSVSSSNSTSTD) is activation peptide. One can recognise a Peptidase A1 domain in the interval 84-388 (YYGEVTVGTP…NPEVPHVQIA (305 aa)). Asp-102 is a catalytic residue. A disulfide bridge links Cys-115 with Cys-118. Residue Asp-285 is part of the active site. A disulfide bridge links Cys-319 with Cys-352.

The protein belongs to the peptidase A1 family.

The enzyme catalyses Hydrolysis of proteins with broad specificity similar to that of pepsin A, preferring hydrophobic residues at P1 and P1'. Clots milk and activates trypsinogen. Does not cleave 4-Gln-|-His-5, but does cleave 10-His-|-Leu-11 and 12-Val-|-Glu-13 in B chain of insulin.. The polypeptide is Rhizopuspepsin-3 (Rhizopus niveus).